The primary structure comprises 335 residues: Teichoic acids export ATP-binding protein TagH (335 aa).

In terms of domain architecture, ABC transporter spans isoleucine 26–lysine 246. An ATP-binding site is contributed by glycine 60 to serine 67.

The protein belongs to the ABC transporter superfamily. Teichoic acids exporter (TC 3.A.1.104.1) family. As to quaternary structure, the complex is composed of two ATP-binding proteins (TagH) and two transmembrane proteins (TagG).

Its subcellular location is the cell membrane. It carries out the reaction ATP + H2O + teichoic acidSide 1 = ADP + phosphate + teichoic acidSide 2.. Its function is as follows. Part of the ABC transporter complex TagGH involved in teichoic acids export. Responsible for energy coupling to the transport system. The polypeptide is Teichoic acids export ATP-binding protein TagH (Listeria innocua serovar 6a (strain ATCC BAA-680 / CLIP 11262)).